The following is a 212-amino-acid chain: Leucyl/phenylalanyl-tRNA--protein transferase (212 aa).

Belongs to the L/F-transferase family.

Its subcellular location is the cytoplasm. The enzyme catalyses N-terminal L-lysyl-[protein] + L-leucyl-tRNA(Leu) = N-terminal L-leucyl-L-lysyl-[protein] + tRNA(Leu) + H(+). It catalyses the reaction N-terminal L-arginyl-[protein] + L-leucyl-tRNA(Leu) = N-terminal L-leucyl-L-arginyl-[protein] + tRNA(Leu) + H(+). The catalysed reaction is L-phenylalanyl-tRNA(Phe) + an N-terminal L-alpha-aminoacyl-[protein] = an N-terminal L-phenylalanyl-L-alpha-aminoacyl-[protein] + tRNA(Phe). In terms of biological role, functions in the N-end rule pathway of protein degradation where it conjugates Leu, Phe and, less efficiently, Met from aminoacyl-tRNAs to the N-termini of proteins containing an N-terminal arginine or lysine. The chain is Leucyl/phenylalanyl-tRNA--protein transferase from Paracoccus denitrificans (strain Pd 1222).